A 346-amino-acid chain; its full sequence is RNA-directed DNA methylation 4 (346 aa).

Residue M1 is modified to N-acetylmethionine. Composition is skewed to acidic residues over residues 253–268 (FCDGSDESDYDSEDSN), 278–312 (PEEEEEEEEEDDDDDDDDESEEEKSEASDESDDEE), and 323–332 (GDDEFDDYAE). Positions 253-346 (FCDGSDESDY…YSESDEEFES (94 aa)) are disordered.

The protein belongs to the IWR1/SLC7A6OS family. Interacts with NRPD1. Associates with Pol II and Pol V complexes.

Its function is as follows. Probable regulatory factor for several RNA polymerases. Effector involved in facilitation of Pol V transcription as RNA scaffold and recruitment of silencing complex to target genomic sites. This is RNA-directed DNA methylation 4 (RDM4) from Arabidopsis thaliana (Mouse-ear cress).